The chain runs to 1374 residues: DNA-directed RNA polymerase subunit beta (1374 aa).

It belongs to the RNA polymerase beta chain family. As to quaternary structure, the RNAP catalytic core consists of 2 alpha, 1 beta, 1 beta' and 1 omega subunit. When a sigma factor is associated with the core the holoenzyme is formed, which can initiate transcription.

It catalyses the reaction RNA(n) + a ribonucleoside 5'-triphosphate = RNA(n+1) + diphosphate. Its function is as follows. DNA-dependent RNA polymerase catalyzes the transcription of DNA into RNA using the four ribonucleoside triphosphates as substrates. The protein is DNA-directed RNA polymerase subunit beta of Acidovorax ebreus (strain TPSY) (Diaphorobacter sp. (strain TPSY)).